The sequence spans 189 residues: Large ribosomal subunit protein eL18 (189 aa).

It belongs to the eukaryotic ribosomal protein eL18 family.

It localises to the cytoplasm. The chain is Large ribosomal subunit protein eL18 (RpL18) from Anopheles gambiae (African malaria mosquito).